We begin with the raw amino-acid sequence, 151 residues long: D-aminoacyl-tRNA deacylase (151 aa).

Residues 138–139 carry the Gly-cisPro motif, important for rejection of L-amino acids motif; that stretch reads GP.

The protein belongs to the DTD family. As to quaternary structure, homodimer.

Its subcellular location is the cytoplasm. The enzyme catalyses glycyl-tRNA(Ala) + H2O = tRNA(Ala) + glycine + H(+). It carries out the reaction a D-aminoacyl-tRNA + H2O = a tRNA + a D-alpha-amino acid + H(+). In terms of biological role, an aminoacyl-tRNA editing enzyme that deacylates mischarged D-aminoacyl-tRNAs. Also deacylates mischarged glycyl-tRNA(Ala), protecting cells against glycine mischarging by AlaRS. Acts via tRNA-based rather than protein-based catalysis; rejects L-amino acids rather than detecting D-amino acids in the active site. By recycling D-aminoacyl-tRNA to D-amino acids and free tRNA molecules, this enzyme counteracts the toxicity associated with the formation of D-aminoacyl-tRNA entities in vivo and helps enforce protein L-homochirality. The sequence is that of D-aminoacyl-tRNA deacylase from Picosynechococcus sp. (strain ATCC 27264 / PCC 7002 / PR-6) (Agmenellum quadruplicatum).